We begin with the raw amino-acid sequence, 621 residues long: uncharacterized protein (621 aa).

Ser-269, Ser-271, Ser-274, Ser-290, and Ser-292 each carry phosphoserine. 6 LRR repeats span residues Gln-333 to Ser-354, Ser-357 to Pro-379, Gln-380 to Ser-401, His-404 to Pro-425, Ser-426 to Val-447, and Asn-451 to Thr-472. Residues Ser-552–Ser-581 are disordered.

It localises to the cytoplasm. The protein localises to the nucleus. Its subcellular location is the vacuole membrane. This is an uncharacterized protein from Schizosaccharomyces pombe (strain 972 / ATCC 24843) (Fission yeast).